Reading from the N-terminus, the 174-residue chain is MAKQQTKRAQASEERDDGLREKMVAINRVTKVVKGGRILGFAALTVVGDGDGGIGMGKGKSREVPVAVQKAMDEARRKMVKVSLKDGTLQHTVVGKHGAASVLMQPAPGGTGIIAGGPMRAVFEVMGVTDIICKCIGSTNPYNVVRATLNGLMAVNTPAEIAAKRGKTIEEILG.

The S5 DRBM domain occupies 19–82 (LREKMVAINR…DEARRKMVKV (64 aa)).

Belongs to the universal ribosomal protein uS5 family. As to quaternary structure, part of the 30S ribosomal subunit. Contacts proteins S4 and S8.

With S4 and S12 plays an important role in translational accuracy. In terms of biological role, located at the back of the 30S subunit body where it stabilizes the conformation of the head with respect to the body. The chain is Small ribosomal subunit protein uS5 from Azoarcus sp. (strain BH72).